Consider the following 541-residue polypeptide: FAD-linked oxidoreductase pynB (541 aa).

An N-terminal signal peptide occupies residues 1-20 (MRLSARGFVWSALLACTASA). N-linked (GlcNAc...) asparagine glycosylation is found at Asn-30, Asn-57, Asn-117, Asn-131, Asn-158, Asn-253, Asn-306, Asn-343, Asn-430, and Asn-461. The region spanning 71–242 (FNEFPALIAY…VDFDLQLMQF (172 aa)) is the FAD-binding PCMH-type domain.

Belongs to the oxygen-dependent FAD-linked oxidoreductase family. FAD serves as cofactor.

Its pathway is secondary metabolite biosynthesis. In terms of biological role, FAD-linked oxidoreductase; part of the gene cluster that mediates the biosynthesis of pyranonigrins, a family of antioxidative compounds. The first step of pyranonigrins biosynthesis is performed by the hybrid PKS-NRPS synthetase that condenses 6 malonyl-CoA units to an acetyl starter unit, to form a 1,3,5-trioxotetradecane-6,8-dienyl-ACP. The enoyl reductase (ER) domain of pynA is likely to be functional during the first two rounds of polyketide chain extension, to generate the saturated C-C bonds of the alkyl side chain. PynA subsequently forms the amide bond between the acyl chain and L-serine. Although pynA has a terminal reductase domain, it appears to require the thioesterase pynI for the release of the straight-chain intermediate from pynA via the formation of a tetramic acid pyranonigrin J. The methyltransferase pynC then coverts pyranonigrin J to pyranonigrin I via N-methylation. The FAD-dependent monooxygenase pynG catalyzes an epoxidation-mediated cyclization to form the dihydro-gamma-pyrone moiety, followed by pynD-catalyzed oxidation of the alcohol to the ketone and enolization to yield the characteristic tetramic acid-fused gamma-pyrone core of pyranonigrin H. Pyranonigrin H is substrate of pynH for dehydration-mediated exo-methylene formation from the serine side chain to produce pyranonigrin E, before the oxidase pynE reduces the exo-methylene of pyranonigrin E into a pendant methyl to form pyranonigrin G. The FAD-linked oxidoreductase pynB performs the reverse reaction and converts pyranonigrin G back to pyranonigrin E. This Aspergillus niger (strain ATCC MYA-4892 / CBS 513.88 / FGSC A1513) protein is FAD-linked oxidoreductase pynB.